A 153-amino-acid polypeptide reads, in one-letter code: Endoribonuclease YbeY (153 aa).

Zn(2+) contacts are provided by H114, H118, and H124.

The protein belongs to the endoribonuclease YbeY family. Requires Zn(2+) as cofactor.

Its subcellular location is the cytoplasm. Functionally, single strand-specific metallo-endoribonuclease involved in late-stage 70S ribosome quality control and in maturation of the 3' terminus of the 16S rRNA. In Nitrosococcus oceani (strain ATCC 19707 / BCRC 17464 / JCM 30415 / NCIMB 11848 / C-107), this protein is Endoribonuclease YbeY.